The chain runs to 255 residues: Ribonuclease PH (255 aa).

Phosphate contacts are provided by residues arginine 86 and 124–126 (GTR).

Belongs to the RNase PH family. Homohexameric ring arranged as a trimer of dimers.

It catalyses the reaction tRNA(n+1) + phosphate = tRNA(n) + a ribonucleoside 5'-diphosphate. Phosphorolytic 3'-5' exoribonuclease that plays an important role in tRNA 3'-end maturation. Removes nucleotide residues following the 3'-CCA terminus of tRNAs; can also add nucleotides to the ends of RNA molecules by using nucleoside diphosphates as substrates, but this may not be physiologically important. Probably plays a role in initiation of 16S rRNA degradation (leading to ribosome degradation) during starvation. This is Ribonuclease PH from Geobacillus sp. (strain WCH70).